We begin with the raw amino-acid sequence, 556 residues long: Membrane protein insertase YidC (556 aa).

A helical membrane pass occupies residues 5–25 (TLTAIVLSFVLLTAFQFYMAW). A disordered region spans residues 36-74 (QVQSGESSAPAPLASTAPVADALPPPVEGMAGSAPQQAM). Positions 42-55 (SSAPAPLASTAPVA) are enriched in low complexity. 4 consecutive transmembrane segments (helical) span residues 370-390 (NYGV…FPLA), 441-461 (LPIL…FLSV), 468-488 (FMLW…PLLM), and 510-530 (IMMF…SGLV).

It belongs to the OXA1/ALB3/YidC family. Type 1 subfamily. Interacts with the Sec translocase complex via SecD. Specifically interacts with transmembrane segments of nascent integral membrane proteins during membrane integration.

The protein resides in the cell inner membrane. Its function is as follows. Required for the insertion and/or proper folding and/or complex formation of integral membrane proteins into the membrane. Involved in integration of membrane proteins that insert both dependently and independently of the Sec translocase complex, as well as at least some lipoproteins. Aids folding of multispanning membrane proteins. This Magnetococcus marinus (strain ATCC BAA-1437 / JCM 17883 / MC-1) protein is Membrane protein insertase YidC.